The following is a 199-amino-acid chain: Prolactin-1 (199 aa).

3 disulfides stabilise this stretch: cysteine 4/cysteine 11, cysteine 58/cysteine 174, and cysteine 191/cysteine 199. Residue asparagine 60 is glycosylated (N-linked (GlcNAc...) asparagine).

This sequence belongs to the somatotropin/prolactin family. Glycosylated.

The protein localises to the secreted. The polypeptide is Prolactin-1 (Crocodylus novaeguineae (Crocodile)).